A 266-amino-acid polypeptide reads, in one-letter code: Putative [LysW]-aminoadipate/[LysW]-glutamate kinase (266 aa).

Residues 36–37, Arg63, and Asn168 each bind substrate; that span reads GG.

It belongs to the acetylglutamate kinase family. LysZ subfamily.

The protein resides in the cytoplasm. It carries out the reaction [amino-group carrier protein]-C-terminal-N-(1,4-dicarboxybutan-1-yl)-L-glutamine + ATP = [amino-group carrier protein]-C-terminal-N-(1-carboxy-5-phosphooxy-5-oxopentan-1-yl)-L-glutamine + ADP. The catalysed reaction is [amino-group carrier protein]-C-terminal-gamma-(L-glutamyl)-L-glutamate + ATP = [amino-group carrier protein]-C-terminal-gamma-(5-phospho-L-glutamyl)-L-glutamate + ADP. Its pathway is amino-acid biosynthesis; L-lysine biosynthesis via AAA pathway; L-lysine from L-alpha-aminoadipate (Thermus route): step 2/5. It functions in the pathway amino-acid biosynthesis; L-arginine biosynthesis. Functionally, involved in both the arginine and lysine biosynthetic pathways. Phosphorylates the LysW-bound precursors glutamate (for arginine biosynthesis), respectively alpha-aminoadipate (for lysine biosynthesis). The sequence is that of Putative [LysW]-aminoadipate/[LysW]-glutamate kinase from Cenarchaeum symbiosum (strain A).